Here is a 259-residue protein sequence, read N- to C-terminus: Bis(5'-nucleosyl)-tetraphosphatase, symmetrical (259 aa).

Belongs to the Ap4A hydrolase family.

It catalyses the reaction P(1),P(4)-bis(5'-adenosyl) tetraphosphate + H2O = 2 ADP + 2 H(+). Functionally, hydrolyzes diadenosine 5',5'''-P1,P4-tetraphosphate to yield ADP. The polypeptide is Bis(5'-nucleosyl)-tetraphosphatase, symmetrical (apaH) (Klebsiella aerogenes (Enterobacter aerogenes)).